Here is a 390-residue protein sequence, read N- to C-terminus: GTPase Obg (390 aa).

The region spanning 1 to 159 is the Obg domain; sequence MKFVDEASIL…RELLLELMLL (159 aa). Positions 127-147 are disordered; that stretch reads NTRFKSSVNRTPRQKTNGTPG. Positions 129–145 are enriched in polar residues; sequence RFKSSVNRTPRQKTNGT. The OBG-type G domain occupies 160–333; that stretch reads ADVGMLGMPN…LCWDVMTFII (174 aa). GTP-binding positions include 166 to 173, 191 to 195, 213 to 216, 283 to 286, and 314 to 316; these read GMPNAGKS, FTTLV, DIPG, NKID, and SAA. Mg(2+) contacts are provided by S173 and T193.

Belongs to the TRAFAC class OBG-HflX-like GTPase superfamily. OBG GTPase family. In terms of assembly, monomer. Requires Mg(2+) as cofactor.

Its subcellular location is the cytoplasm. Functionally, an essential GTPase which binds GTP, GDP and possibly (p)ppGpp with moderate affinity, with high nucleotide exchange rates and a fairly low GTP hydrolysis rate. Plays a role in control of the cell cycle, stress response, ribosome biogenesis and in those bacteria that undergo differentiation, in morphogenesis control. The polypeptide is GTPase Obg (Shigella dysenteriae serotype 1 (strain Sd197)).